A 250-amino-acid chain; its full sequence is Triosephosphate isomerase (250 aa).

A substrate-binding site is contributed by 9 to 11; the sequence is NWK. Histidine 96 serves as the catalytic Electrophile. The active-site Proton acceptor is the glutamate 166. Substrate is bound by residues glycine 172, serine 212, and 233-234; that span reads GG.

It belongs to the triosephosphate isomerase family. As to quaternary structure, homodimer.

It is found in the cytoplasm. It catalyses the reaction D-glyceraldehyde 3-phosphate = dihydroxyacetone phosphate. Its pathway is carbohydrate biosynthesis; gluconeogenesis. It participates in carbohydrate degradation; glycolysis; D-glyceraldehyde 3-phosphate from glycerone phosphate: step 1/1. Functionally, involved in the gluconeogenesis. Catalyzes stereospecifically the conversion of dihydroxyacetone phosphate (DHAP) to D-glyceraldehyde-3-phosphate (G3P). This is Triosephosphate isomerase from Chlorobium luteolum (strain DSM 273 / BCRC 81028 / 2530) (Pelodictyon luteolum).